A 637-amino-acid polypeptide reads, in one-letter code: Interleukin-17 receptor E (637 aa).

Positions 1–24 (MGSPRLAALLLSQPLLFICLAVSA) are cleaved as a signal peptide. At 25-415 (QVACPCLPRW…LCPDVSHRHL (391 aa)) the chain is on the extracellular side. N-linked (GlcNAc...) asparagine glycans are attached at residues Asn-278 and Asn-307. The chain crosses the membrane as a helical span at residues 416–436 (GLLILALLGLTTLLGVVLVLF). Residues 437–637 (CRRLLPGPGR…TNSPCGFSCL (201 aa)) are Cytoplasmic-facing. The 137-residue stretch at 447–583 (TRPVLLLHAA…LLRDLPRLLR (137 aa)) folds into the SEFIR domain.

In terms of assembly, forms heterodimers with IL17RE; the heterodimer binds IL17C.

It localises to the cell membrane. Specific functional receptor for IL17C, signaling through the NF-kappa-B and MAPK pathways. Requires TRAF3IP2 /ACT1 for signaling. Crucial regulator in innate immunity to bacterial pathogens. This Rattus norvegicus (Rat) protein is Interleukin-17 receptor E (Il17re).